Consider the following 379-residue polypeptide: Probable RNA 3'-terminal phosphate cyclase-like protein (379 aa).

It belongs to the RNA 3'-terminal cyclase family. Type 2 subfamily. As to quaternary structure, part of the small subunit (SSU) processome, composed of more than 70 proteins and the RNA chaperone small nucleolar RNA (snoRNA) U3.

Its subcellular location is the nucleus. The protein localises to the nucleolus. Functionally, part of the small subunit (SSU) processome, first precursor of the small eukaryotic ribosomal subunit. During the assembly of the SSU processome in the nucleolus, many ribosome biogenesis factors, an RNA chaperone and ribosomal proteins associate with the nascent pre-rRNA and work in concert to generate RNA folding, modifications, rearrangements and cleavage as well as targeted degradation of pre-ribosomal RNA by the RNA exosome. Does not have cyclase activity. This is Probable RNA 3'-terminal phosphate cyclase-like protein from Caenorhabditis elegans.